We begin with the raw amino-acid sequence, 270 residues long: Type III pantothenate kinase (270 aa).

Residue 11–18 (DAGNSRIK) participates in ATP binding. Substrate contacts are provided by residues tyrosine 96 and 103–106 (GSDR). Aspartate 105 functions as the Proton acceptor in the catalytic mechanism. Threonine 129 is an ATP binding site. Residue threonine 195 coordinates substrate.

Belongs to the type III pantothenate kinase family. As to quaternary structure, homodimer. It depends on NH4(+) as a cofactor. Requires K(+) as cofactor.

The protein localises to the cytoplasm. It catalyses the reaction (R)-pantothenate + ATP = (R)-4'-phosphopantothenate + ADP + H(+). Its pathway is cofactor biosynthesis; coenzyme A biosynthesis; CoA from (R)-pantothenate: step 1/5. Functionally, catalyzes the phosphorylation of pantothenate (Pan), the first step in CoA biosynthesis. The polypeptide is Type III pantothenate kinase (Paraburkholderia phytofirmans (strain DSM 17436 / LMG 22146 / PsJN) (Burkholderia phytofirmans)).